A 355-amino-acid chain; its full sequence is UDP-N-acetylglucosamine--N-acetylmuramyl-(pentapeptide) pyrophosphoryl-undecaprenol N-acetylglucosamine transferase (355 aa).

UDP-N-acetyl-alpha-D-glucosamine-binding positions include 15–17 (TGG), asparagine 127, arginine 163, serine 191, isoleucine 244, 263–268 (ALTVSE), and glutamine 288.

It belongs to the glycosyltransferase 28 family. MurG subfamily.

The protein localises to the cell inner membrane. The enzyme catalyses di-trans,octa-cis-undecaprenyl diphospho-N-acetyl-alpha-D-muramoyl-L-alanyl-D-glutamyl-meso-2,6-diaminopimeloyl-D-alanyl-D-alanine + UDP-N-acetyl-alpha-D-glucosamine = di-trans,octa-cis-undecaprenyl diphospho-[N-acetyl-alpha-D-glucosaminyl-(1-&gt;4)]-N-acetyl-alpha-D-muramoyl-L-alanyl-D-glutamyl-meso-2,6-diaminopimeloyl-D-alanyl-D-alanine + UDP + H(+). The protein operates within cell wall biogenesis; peptidoglycan biosynthesis. Cell wall formation. Catalyzes the transfer of a GlcNAc subunit on undecaprenyl-pyrophosphoryl-MurNAc-pentapeptide (lipid intermediate I) to form undecaprenyl-pyrophosphoryl-MurNAc-(pentapeptide)GlcNAc (lipid intermediate II). This chain is UDP-N-acetylglucosamine--N-acetylmuramyl-(pentapeptide) pyrophosphoryl-undecaprenol N-acetylglucosamine transferase, found in Salmonella typhi.